We begin with the raw amino-acid sequence, 90 residues long: Barstar (90 aa).

Belongs to the barstar family.

The protein localises to the cytoplasm. Functionally, inhibitor of the ribonuclease barnase. Forms a one-to-one non-covalent complex. This Bacillus amyloliquefaciens (Bacillus velezensis) protein is Barstar.